A 324-amino-acid polypeptide reads, in one-letter code: MSIYDDILKQFPTIDEWSDSDQKIMLEPYTYLGINTAKELPSMVTKALNHWYQVPQPALDIVLQIVGPIHAACLLIDDIQDDSDLRGGNPVAHKVYGVAQTINTATYVCFDAYHKISELRPFLKSPETIDLWSIINDEIAALHRGQWIDLYWRDSLICPTEEEYLRMIHNKTGAIFRLPMRLLQALSPVDSVPDCFPLVNIVGILVQIRNDLLSLSADFTKDKGFCEDFSEGKFSFPIIHSVKADSSNSLLMDILRLRPKDEATKMKALRYMKDQTKSLDHTFDVLCKLEKTAKQELEKLGGNSELSSIFERIHLSPTPEIEDH.

The Mg(2+) site is built by Asp77 and Asp81.

Belongs to the FPP/GGPP synthase family. Mg(2+) is required as a cofactor.

The enzyme catalyses (2E)-geranyl diphosphate = (E)-beta-ocimene + diphosphate. It catalyses the reaction (2E)-geranyl diphosphate + H2O = linalool + diphosphate. The catalysed reaction is (2E,6E)-farnesyl diphosphate = (3E,6E)-alpha-farnesene + diphosphate. It carries out the reaction (2E,6E,10E)-geranylgeranyl diphosphate = (E,E,E)-alpha-springene + diphosphate. Its function is as follows. Terpene synthase that shows monoterpene synthase activity and produces (E)-beta-ocimene as a major product and linalool as a minor product, using geranyl diphosphate (GPP) as substrate. Also shows sesquiterpene synthase activity as it is able to convert farnesyl diphosphate (FPP) into (E,E)-alpha-farnesene. Finally, TPS1 can convert geranylgeranyl diphosphate into (E,E,E)-alpha-springene. The chain is IDS-like terpene synthase 1 from Melampsora larici-populina (strain 98AG31 / pathotype 3-4-7) (Poplar leaf rust fungus).